The chain runs to 314 residues: 4-hydroxy-3-methylbut-2-enyl diphosphate reductase (314 aa).

Cys12 serves as a coordination point for [4Fe-4S] cluster. (2E)-4-hydroxy-3-methylbut-2-enyl diphosphate contacts are provided by His41 and His74. The dimethylallyl diphosphate site is built by His41 and His74. Residues His41 and His74 each contribute to the isopentenyl diphosphate site. Cys96 is a binding site for [4Fe-4S] cluster. His124 contacts (2E)-4-hydroxy-3-methylbut-2-enyl diphosphate. His124 is a binding site for dimethylallyl diphosphate. His124 serves as a coordination point for isopentenyl diphosphate. Glu126 acts as the Proton donor in catalysis. Thr167 lines the (2E)-4-hydroxy-3-methylbut-2-enyl diphosphate pocket. Cys197 contacts [4Fe-4S] cluster. Ser225, Ser226, Asn227, and Ser269 together coordinate (2E)-4-hydroxy-3-methylbut-2-enyl diphosphate. Dimethylallyl diphosphate-binding residues include Ser225, Ser226, Asn227, and Ser269. Ser225, Ser226, Asn227, and Ser269 together coordinate isopentenyl diphosphate.

This sequence belongs to the IspH family. Requires [4Fe-4S] cluster as cofactor.

It carries out the reaction isopentenyl diphosphate + 2 oxidized [2Fe-2S]-[ferredoxin] + H2O = (2E)-4-hydroxy-3-methylbut-2-enyl diphosphate + 2 reduced [2Fe-2S]-[ferredoxin] + 2 H(+). It catalyses the reaction dimethylallyl diphosphate + 2 oxidized [2Fe-2S]-[ferredoxin] + H2O = (2E)-4-hydroxy-3-methylbut-2-enyl diphosphate + 2 reduced [2Fe-2S]-[ferredoxin] + 2 H(+). It participates in isoprenoid biosynthesis; dimethylallyl diphosphate biosynthesis; dimethylallyl diphosphate from (2E)-4-hydroxy-3-methylbutenyl diphosphate: step 1/1. The protein operates within isoprenoid biosynthesis; isopentenyl diphosphate biosynthesis via DXP pathway; isopentenyl diphosphate from 1-deoxy-D-xylulose 5-phosphate: step 6/6. In terms of biological role, catalyzes the conversion of 1-hydroxy-2-methyl-2-(E)-butenyl 4-diphosphate (HMBPP) into a mixture of isopentenyl diphosphate (IPP) and dimethylallyl diphosphate (DMAPP). Acts in the terminal step of the DOXP/MEP pathway for isoprenoid precursor biosynthesis. The sequence is that of 4-hydroxy-3-methylbut-2-enyl diphosphate reductase from Aliivibrio fischeri (strain MJ11) (Vibrio fischeri).